Consider the following 804-residue polypeptide: Pentatricopeptide repeat-containing protein At4g35130, chloroplastic (804 aa).

Residues 1 to 19 (MAATLLSQCYRIYNSDACK) constitute a chloroplast transit peptide. 16 PPR repeats span residues 63–93 (NDPA…MNKA), 94–128 (DAFL…GVKA), 129–163 (DTFT…GFVS), 164–194 (DVYV…MPER), 195–229 (DIVS…GFKP), 230–264 (DRFS…RIET), 266–296 (DVMV…MIQR), 297–332 (NIVA…GLQP), 333–363 (DVIT…GFLP), 364–394 (HMVL…MAEK), 395–429 (NVIS…SLVP), 430–464 (DSTT…RYWS), 465–495 (NTII…ILLK), 496–530 (DVVS…RVNP), 531–561 (NKST…MKRE), and 567–597 (GIEH…MPFV). The segment at 602 to 677 (IWGSLLNASR…TSSRSTVEAK (76 aa)) is type E motif. A type E(+) motif region spans residues 678 to 708 (GKSHVFTNGDRSHVATNKIYEVLDVVSRMVG). A type DYW motif region spans residues 710–804 (EDIYVHCVSR…NGRCSCGNYW (95 aa)).

The protein belongs to the PPR family. PCMP-H subfamily.

The protein localises to the plastid. It localises to the chloroplast. The sequence is that of Pentatricopeptide repeat-containing protein At4g35130, chloroplastic (PCMP-H27) from Arabidopsis thaliana (Mouse-ear cress).